Consider the following 1120-residue polypeptide: Hachiman protein HamB (1120 aa).

One can recognise a Helicase ATP-binding domain in the interval 278 to 452 (DGELLKNDGF…WIGEDDKAKR (175 aa)). 291–298 (MPTSSGKT) is a binding site for ATP. The DEAH box signature appears at 395-398 (DEGH). The 190-residue stretch at 521-710 (ATATKMLDVG…NIEKATSGLY (190 aa)) folds into the Helicase C-terminal domain.

Belongs to the helicase family.

Functionally, component of antiviral defense system Hachiman, composed of HamA and HamB. Expression of Hachiman in B.subtilis (strain BEST7003) confers resistance to phages phi105, phi29, phi3T, rho14, SBSphiJ, SpBeta and SPR. Probably a helicase. The chain is Hachiman protein HamB from Bacillus cereus.